Reading from the N-terminus, the 493-residue chain is MTALNELTLAEARDGLKAKDFSAREIAQAHLDAIDRAKALNAYIVATPDRALKMAEVSDQKIAKGEARPLEGLPLGIKDLFATQGVHTTAGSKILEGFEPHYESNVSSQLWRDGAVMLGKLNLDEFAMGSSNETSAYGKTISPWRRQGSDAPLVPGGSSGGSAAAVAAHLCLGATATDTGGSIRQPAAFTGTVGIKPTYGRCSRWGIIAYASSLDQAGPIARTVQDCAILLGSMAGHDPRDTTSVDMPVPDFEAAISRGVKGLTIGIPKEYRVEGMPAEIQRLWDQGADWLREAGATIKEISLPHTQYALPAYYIVAPAEASSNLARYDGVRYGLRVPGKDIAGMYENTRAAGFGREVKRRIMIGTYVLSAGYYDAYYVRAQKIRTLIKRDFEAAYAAGVDAILTPATPSAAFGIGEMASADPVEMYLNDVFTVTVNMAGLPGISVPAGLDAQGLPLGLQLIGRPFDEETLFAAAQTIENAAGRISLPKAWWA.

Catalysis depends on charge relay system residues Lys78 and Ser158. Catalysis depends on Ser182, which acts as the Acyl-ester intermediate.

The protein belongs to the amidase family. GatA subfamily. As to quaternary structure, heterotrimer of A, B and C subunits.

The enzyme catalyses L-glutamyl-tRNA(Gln) + L-glutamine + ATP + H2O = L-glutaminyl-tRNA(Gln) + L-glutamate + ADP + phosphate + H(+). In terms of biological role, allows the formation of correctly charged Gln-tRNA(Gln) through the transamidation of misacylated Glu-tRNA(Gln) in organisms which lack glutaminyl-tRNA synthetase. The reaction takes place in the presence of glutamine and ATP through an activated gamma-phospho-Glu-tRNA(Gln). The chain is Glutamyl-tRNA(Gln) amidotransferase subunit A from Methylorubrum extorquens (strain CM4 / NCIMB 13688) (Methylobacterium extorquens).